A 213-amino-acid chain; its full sequence is Kiwellin (213 aa).

The N-terminal stretch at 1 to 24 (MAQLSLLVLSLFLTLISLPPPGAS) is a signal peptide. Intrachain disulfides connect Cys28/Cys60, Cys32/Cys44, and Cys38/Cys49. A 4-hydroxyproline mark is found at Pro65 and Pro67. Disulfide bonds link Cys72-Cys90, Cys80-Cys172, Cys119-Cys144, and Cys166-Cys182. A disordered region spans residues 91–121 (SPPVTSSTPAKLTNNDFSEGGDGGGPSECDE). Over residues 93 to 107 (PVTSSTPAKLTNNDF) the composition is skewed to polar residues.

This sequence belongs to the kiwellin family. In terms of processing, undergoes proteolytic cleavage by actinidin to produce kissper and KiTH. Three forms of KiTH are produced by cleavage at different sites.

Its subcellular location is the secreted. Functionally, kissper is an anion-selective pore-forming peptide. In Actinidia chinensis var. chinensis (Chinese soft-hair kiwi), this protein is Kiwellin.